Here is a 184-residue protein sequence, read N- to C-terminus: GTP cyclohydrolase 1 (184 aa).

3 residues coordinate Zn(2+): Cys75, His78, and Cys146.

It belongs to the GTP cyclohydrolase I family. In terms of assembly, toroid-shaped homodecamer, composed of two pentamers of five dimers.

The catalysed reaction is GTP + H2O = 7,8-dihydroneopterin 3'-triphosphate + formate + H(+). The protein operates within cofactor biosynthesis; 7,8-dihydroneopterin triphosphate biosynthesis; 7,8-dihydroneopterin triphosphate from GTP: step 1/1. This is GTP cyclohydrolase 1 from Streptococcus pneumoniae serotype 2 (strain D39 / NCTC 7466).